The following is a 294-amino-acid chain: Endonuclease 3 (294 aa).

Residues Met-1–Cys-24 form the signal peptide. A divalent metal cation contacts are provided by Trp-25 and His-30. Residue Trp-25 to His-30 coordinates substrate. Cys-34 and Cys-65 form a disulfide bridge. The a divalent metal cation site is built by Asp-69 and His-84. Residues Asp-69–Pro-75, His-84–Asp-87, and Asn-94–Arg-99 contribute to the substrate site. Disulfide bonds link Cys-93–Cys-241, Cys-101–Cys-106, and Cys-221–Cys-228. Substrate contacts are provided by Asn-113 and Tyr-131. A glycan (N-linked (GlcNAc...) asparagine) is linked at Asn-113. Asn-132 carries N-linked (GlcNAc...) asparagine glycosylation. A divalent metal cation contacts are provided by His-142, Asp-146, His-152, His-176, and Asp-180. The substrate binding stretch occupies residues His-142–Tyr-191. 3 N-linked (GlcNAc...) asparagine glycosylation sites follow: Asn-193, Asn-224, and Asn-247. Positions Gly-279–Ala-294 are cleaved as a propeptide — removed in mature form.

It belongs to the nuclease type I family. As to quaternary structure, monomer. Requires Zn(2+) as cofactor. The cofactor is Mn(2+).

The catalysed reaction is Endonucleolytic cleavage to 5'-phosphomononucleotide and 5'-phosphooligonucleotide end-products.. Functionally, endonuclease that can use RNA and single-stranded DNA as substrates. In contradiction with PubMed:23620482, cannot hydrolyze single-stranded DNA and does not cleave mismatches. The chain is Endonuclease 3 from Arabidopsis thaliana (Mouse-ear cress).